We begin with the raw amino-acid sequence, 597 residues long: Myrcene synthase, chloroplastic (597 aa).

Residues 1–56 (MALKLLTSLPMYNFSRVPVSSKDPILLVTSRTRNGYLARPVQCMVANKVSTSPDIL) constitute a chloroplast transit peptide. Residues R310, D347, D351, R488, and D491 each contribute to the (2E)-geranyl diphosphate site. Residues D347 and D351 each coordinate Mg(2+). The short motif at 347 to 351 (DDVYD) is the DDXXD motif element. D491, T495, and E499 together coordinate Mg(2+).

Belongs to the terpene synthase family. Tpsb subfamily. The cofactor is Mg(2+). Mn(2+) is required as a cofactor.

It is found in the plastid. It localises to the chloroplast. It carries out the reaction (2E)-geranyl diphosphate = beta-myrcene + diphosphate. Involved in monoterpene (C10) biosynthesis. The major product is myrcene followed by minor amounts (1.2%) of the cyclic monoterpene limonene. The polypeptide is Myrcene synthase, chloroplastic (Quercus ilex (Holly oak)).